Reading from the N-terminus, the 66-residue chain is uncharacterized protein (66 aa).

The helical transmembrane segment at 32-49 threads the bilayer; that stretch reads WAFSLLIAGSAFLWIYMR.

It is found in the membrane. This is an uncharacterized protein from Bacillus subtilis (strain 168).